A 254-amino-acid polypeptide reads, in one-letter code: Pimeloyl-[acyl-carrier protein] methyl ester esterase (254 aa).

In terms of domain architecture, AB hydrolase-1 spans 14-238; it reads VVMLHGWGLH…QASHAPFLSH (225 aa). Residues Trp-20, 80–81, and 142–146 each bind substrate; these read SL and FLALQ. Residue Ser-80 is the Nucleophile of the active site. Catalysis depends on residues Asp-204 and His-232. His-232 serves as a coordination point for substrate.

Belongs to the AB hydrolase superfamily. Carboxylesterase BioH family. Monomer.

Its subcellular location is the cytoplasm. It carries out the reaction 6-carboxyhexanoyl-[ACP] methyl ester + H2O = 6-carboxyhexanoyl-[ACP] + methanol + H(+). It functions in the pathway cofactor biosynthesis; biotin biosynthesis. The physiological role of BioH is to remove the methyl group introduced by BioC when the pimeloyl moiety is complete. It allows to synthesize pimeloyl-ACP via the fatty acid synthetic pathway through the hydrolysis of the ester bonds of pimeloyl-ACP esters. The sequence is that of Pimeloyl-[acyl-carrier protein] methyl ester esterase from Chromobacterium violaceum (strain ATCC 12472 / DSM 30191 / JCM 1249 / CCUG 213 / NBRC 12614 / NCIMB 9131 / NCTC 9757 / MK).